A 360-amino-acid chain; its full sequence is Protein Wnt-5b (360 aa).

The signal sequence occupies residues 1 to 16; that stretch reads MTPILRLLLLSSLLSC. Cys-84 and Cys-95 form a disulfide bridge. 2 N-linked (GlcNAc...) asparagine glycosylation sites follow: Asn-94 and Asn-100. Disulfide bonds link Cys-134/Cys-142, Cys-144/Cys-162, Cys-218/Cys-232, Cys-220/Cys-227, Cys-289/Cys-320, Cys-305/Cys-315, Cys-319/Cys-359, Cys-335/Cys-350, Cys-337/Cys-347, and Cys-342/Cys-343. Ser-224 carries O-palmitoleoyl serine; by PORCN lipidation. 2 N-linked (GlcNAc...) asparagine glycosylation sites follow: Asn-292 and Asn-306.

This sequence belongs to the Wnt family. Palmitoleoylation is required for efficient binding to frizzled receptors. Depalmitoleoylation leads to Wnt signaling pathway inhibition.

The protein localises to the secreted. It localises to the extracellular space. It is found in the extracellular matrix. In terms of biological role, ligand for members of the frizzled family of seven transmembrane receptors. Probable developmental protein. May be a signaling molecule which affects the development of discrete regions of tissues. Is likely to signal over only few cell diameters. The protein is Protein Wnt-5b (wnt5b) of Xenopus laevis (African clawed frog).